Consider the following 154-residue polypeptide: MKRAKQVLYLVISLLVVIADQGLKNYIVTNFKIGDEHTVIPGILSFTYLQNDGAAWNIFSGQMILFYLISIAAIAVVVYYLFNPKYKNWLFDTGLALVLGGIIGNFIDRLHLKYVIDMLQLDFVQFNIFNIADSAITVGIVLVFIYLIFMSEKD.

Helical transmembrane passes span 7 to 27 (VLYLVISLLVVIADQGLKNYI), 58 to 78 (IFSGQMILFYLISIAAIAVVV), and 88 to 108 (NWLFDTGLALVLGGIIGNFID). Active-site residues include Asp-117 and Asp-133. Residues 128 to 148 (IFNIADSAITVGIVLVFIYLI) traverse the membrane as a helical segment.

This sequence belongs to the peptidase A8 family.

Its subcellular location is the cell membrane. The enzyme catalyses Release of signal peptides from bacterial membrane prolipoproteins. Hydrolyzes -Xaa-Yaa-Zaa-|-(S,diacylglyceryl)Cys-, in which Xaa is hydrophobic (preferably Leu), and Yaa (Ala or Ser) and Zaa (Gly or Ala) have small, neutral side chains.. It functions in the pathway protein modification; lipoprotein biosynthesis (signal peptide cleavage). In terms of biological role, this protein specifically catalyzes the removal of signal peptides from prolipoproteins. The sequence is that of Lipoprotein signal peptidase from Lactobacillus gasseri (strain ATCC 33323 / DSM 20243 / BCRC 14619 / CIP 102991 / JCM 1131 / KCTC 3163 / NCIMB 11718 / NCTC 13722 / AM63).